Here is a 507-residue protein sequence, read N- to C-terminus: ATP synthase subunit alpha, mitochondrial (507 aa).

Residue glycine 171–threonine 178 coordinates ATP.

This sequence belongs to the ATPase alpha/beta chains family. In terms of assembly, F-type ATPases have 2 components, CF(1) - the catalytic core - and CF(0) - the membrane proton channel. CF(1) has five subunits: alpha(3), beta(3), gamma(1), delta(1), epsilon(1). CF(0) has three main subunits: a, b and c.

It localises to the mitochondrion. Its subcellular location is the mitochondrion inner membrane. Functionally, mitochondrial membrane ATP synthase (F(1)F(0) ATP synthase or Complex V) produces ATP from ADP in the presence of a proton gradient across the membrane which is generated by electron transport complexes of the respiratory chain. F-type ATPases consist of two structural domains, F(1) - containing the extramembraneous catalytic core, and F(0) - containing the membrane proton channel, linked together by a central stalk and a peripheral stalk. During catalysis, ATP synthesis in the catalytic domain of F(1) is coupled via a rotary mechanism of the central stalk subunits to proton translocation. Subunits alpha and beta form the catalytic core in F(1). Rotation of the central stalk against the surrounding alpha(3)beta(3) subunits leads to hydrolysis of ATP in three separate catalytic sites on the beta subunits. Subunit alpha does not bear the catalytic high-affinity ATP-binding sites. In Raphanus sativus (Radish), this protein is ATP synthase subunit alpha, mitochondrial (ATPA).